The sequence spans 481 residues: MSPQTETKTSVGFKAGVKDYKLTYYTPYYETKATDILAAFRVTPQPGVPPEEAGAAVAAESSTGTWTTVWTDGLTSLDRYKGRCYHIERVFGEKDQYIAYVAYPLDLFEEGSVTNMFTSIVGNVFGFKALRALRLEDLRIPPAYTKTFKGPPHGIQVERDKLNKYGRPLLGCTIKPKLGLSAKNYGRAVYECLRGGLDFTKDDENVNSQPFMRWRDRFLFCAEAIYKSQAETGEIKGHYLNATAGTCEEMLRRAYFAKELGVPIIMHDYLTGGFTANTSLAHFCRENGLLLHIHRAMHAVIDRQKNHGIHFRVLAKALRLSGGDHIHAGTVVGKLEGEREITLGFVDLLRDNFVEKDRSRGIYFTQDWVSLPGVLPVASGGIHVWHMPALTDIFGDDSVLQFGGGTLGHPWGNAPGAVANRVALEACVQARNEGLDLAQDGNSIIRQASNWSPELAAACEVWKEIQFNFKSVDTLDLNEIK.

Residues 1-2 (MS) constitute a propeptide that is removed on maturation. Position 3 is an N-acetylproline (Pro-3). Lys-14 carries the N6,N6,N6-trimethyllysine modification. The substrate site is built by Asn-123 and Thr-173. Lys-175 (proton acceptor) is an active-site residue. Residue Lys-177 participates in substrate binding. Positions 201, 203, and 204 each coordinate Mg(2+). Lys-201 carries the post-translational modification N6-carboxylysine. The active-site Proton acceptor is His-294. 3 residues coordinate substrate: Arg-295, His-327, and Ser-379.

Belongs to the RuBisCO large chain family. Type I subfamily. In terms of assembly, heterohexadecamer of 8 large chains and 8 small chains; disulfide-linked. The disulfide link is formed within the large subunit homodimers. Requires Mg(2+) as cofactor. Post-translationally, the disulfide bond which can form in the large chain dimeric partners within the hexadecamer appears to be associated with oxidative stress and protein turnover.

The protein localises to the plastid. It catalyses the reaction 2 (2R)-3-phosphoglycerate + 2 H(+) = D-ribulose 1,5-bisphosphate + CO2 + H2O. The catalysed reaction is D-ribulose 1,5-bisphosphate + O2 = 2-phosphoglycolate + (2R)-3-phosphoglycerate + 2 H(+). In terms of biological role, ruBisCO catalyzes two reactions: the carboxylation of D-ribulose 1,5-bisphosphate, the primary event in carbon dioxide fixation, as well as the oxidative fragmentation of the pentose substrate in the photorespiration process. Both reactions occur simultaneously and in competition at the same active site. This is Ribulose bisphosphate carboxylase large chain from Cuscuta sandwichiana (Kauna'oa).